Consider the following 299-residue polypeptide: Probable alpha-L-glutamate ligase (299 aa).

The region spanning 112-294 is the ATP-grasp domain; sequence LQLLTEQGIA…IALQMIVHIE (183 aa). ATP contacts are provided by residues K148, 185 to 186, D194, and 218 to 220; these read DF and RAN. Mg(2+) contacts are provided by D255, E267, and N269. The Mn(2+) site is built by D255, E267, and N269.

It belongs to the RimK family. Mg(2+) serves as cofactor. Mn(2+) is required as a cofactor.

This Histophilus somni (strain 129Pt) (Haemophilus somnus) protein is Probable alpha-L-glutamate ligase.